The sequence spans 205 residues: Protein N-terminal glutamine amidohydrolase (205 aa).

Residues Cys20, His74, and Asp90 contribute to the active site.

This sequence belongs to the NTAQ1 family. Monomer.

It catalyses the reaction N-terminal L-glutaminyl-[protein] + H2O = N-terminal L-glutamyl-[protein] + NH4(+). Mediates the side-chain deamidation of N-terminal glutamine residues to glutamate, an important step in N-end rule pathway of protein degradation. Conversion of the resulting N-terminal glutamine to glutamate renders the protein susceptible to arginylation, polyubiquitination and degradation as specified by the N-end rule. Does not act on substrates with internal or C-terminal glutamine and does not act on non-glutamine residues in any position. This is Protein N-terminal glutamine amidohydrolase (tun) from Drosophila willistoni (Fruit fly).